A 609-amino-acid chain; its full sequence is Cationic amino acid transporter 3, mitochondrial (609 aa).

A mitochondrion-targeting transit peptide spans 1–14 (MGCLRSLVRRKQFD). 14 helical membrane passes run 38 to 58 (LIAI…VGTV), 66 to 86 (ALAL…FCYA), 104 to 124 (ICIG…EYTI), 161 to 181 (IVVD…CCLG), 190 to 210 (GIVT…GSYL), 226 to 246 (FPYG…AYIG), 270 to 290 (ISLL…VGLV), 314 to 334 (AYLI…GSIL), 361 to 381 (QVPI…AFFM), 388 to 408 (GMVS…LLIV), 474 to 494 (IMFT…FLLP), 499 to 519 (YSLC…LICI), 534 to 554 (FICP…MYLL), and 558 to 578 (GAAT…VYIF).

It belongs to the amino acid-polyamine-organocation (APC) superfamily. Cationic amino acid transporter (CAT) (TC 2.A.3.3) family. As to expression, expressed in roots, stems, flowers, and leaves.

It localises to the mitochondrion membrane. Permease involved in the transport of the cationic neutral or acidic amino acids. This Arabidopsis thaliana (Mouse-ear cress) protein is Cationic amino acid transporter 3, mitochondrial (CAT3).